A 347-amino-acid chain; its full sequence is NADH-ubiquinone oxidoreductase chain 2 (347 aa).

The next 9 helical transmembrane spans lie at 3-23, 59-79, 89-109, 150-170, 178-198, 201-221, 237-257, 276-296, and 326-346; these read PMTF…VMMS, YFLT…INLL, LINP…LGLA, NLNI…WGGL, IMAY…MYNP, MLLN…LLMI, LPLI…LPPL, IILS…YTRI, and LPLM…TAIL.

The protein belongs to the complex I subunit 2 family. In terms of assembly, core subunit of respiratory chain NADH dehydrogenase (Complex I) which is composed of 45 different subunits. Interacts with TMEM242.

It localises to the mitochondrion inner membrane. It catalyses the reaction a ubiquinone + NADH + 5 H(+)(in) = a ubiquinol + NAD(+) + 4 H(+)(out). Functionally, core subunit of the mitochondrial membrane respiratory chain NADH dehydrogenase (Complex I) which catalyzes electron transfer from NADH through the respiratory chain, using ubiquinone as an electron acceptor. Essential for the catalytic activity and assembly of complex I. In Nyctophilus arnhemensis (Northern long-eared bat), this protein is NADH-ubiquinone oxidoreductase chain 2.